The sequence spans 95 residues: Integration host factor subunit beta (95 aa).

The protein belongs to the bacterial histone-like protein family. Heterodimer of an alpha and a beta chain.

Its function is as follows. This protein is one of the two subunits of integration host factor, a specific DNA-binding protein that functions in genetic recombination as well as in transcriptional and translational control. The polypeptide is Integration host factor subunit beta (Erwinia tasmaniensis (strain DSM 17950 / CFBP 7177 / CIP 109463 / NCPPB 4357 / Et1/99)).